Here is a 330-residue protein sequence, read N- to C-terminus: MKKVYYDQDANLELLREKKIAIIGYGSQGHAQAQNLKDSGLNVVVGLHKKSKSREKAEADGFTVMKVDEAAQWADIIQILVPDQIQGELYRDKIEEHLKPGKALMFSHGFNIHYGQIVPPPDVDVFLVAPKSPGHLVRRMYLEGKGVPGLIAVYQDATGKAKDLALAYAKGIGCTRAGVFETTFKEETETDLFGEQAVLCGGVTHLIKAGFETLVEAGYAPEMAYFECLHEMKLIVDLIYEGGFSLMRYSISDTAEYGDYMVGPRIITEETKKEMKKVLEEIQNGTFAKNWILENMAGRPVYNAIKRREQEHLIEKVGAELRQMMPWLKK.

The KARI N-terminal Rossmann domain occupies 1–182; sequence MKKVYYDQDA…GCTRAGVFET (182 aa). Residues 25–28, S51, S53, and 83–86 contribute to the NADP(+) site; these read YGSQ and DQIQ. The active site involves H108. G134 provides a ligand contact to NADP(+). The KARI C-terminal knotted domain maps to 183 to 328; it reads TFKEETETDL…AELRQMMPWL (146 aa). The Mg(2+) site is built by D191, E195, E227, and E231. Residue S252 coordinates substrate.

The protein belongs to the ketol-acid reductoisomerase family. Mg(2+) serves as cofactor.

It catalyses the reaction (2R)-2,3-dihydroxy-3-methylbutanoate + NADP(+) = (2S)-2-acetolactate + NADPH + H(+). It carries out the reaction (2R,3R)-2,3-dihydroxy-3-methylpentanoate + NADP(+) = (S)-2-ethyl-2-hydroxy-3-oxobutanoate + NADPH + H(+). Its pathway is amino-acid biosynthesis; L-isoleucine biosynthesis; L-isoleucine from 2-oxobutanoate: step 2/4. The protein operates within amino-acid biosynthesis; L-valine biosynthesis; L-valine from pyruvate: step 2/4. Its function is as follows. Involved in the biosynthesis of branched-chain amino acids (BCAA). Catalyzes an alkyl-migration followed by a ketol-acid reduction of (S)-2-acetolactate (S2AL) to yield (R)-2,3-dihydroxy-isovalerate. In the isomerase reaction, S2AL is rearranged via a Mg-dependent methyl migration to produce 3-hydroxy-3-methyl-2-ketobutyrate (HMKB). In the reductase reaction, this 2-ketoacid undergoes a metal-dependent reduction by NADPH to yield (R)-2,3-dihydroxy-isovalerate. This chain is Ketol-acid reductoisomerase (NADP(+)), found in Carboxydothermus hydrogenoformans (strain ATCC BAA-161 / DSM 6008 / Z-2901).